Reading from the N-terminus, the 139-residue chain is Transcription antitermination protein NusB (139 aa).

It belongs to the NusB family.

Involved in transcription antitermination. Required for transcription of ribosomal RNA (rRNA) genes. Binds specifically to the boxA antiterminator sequence of the ribosomal RNA (rrn) operons. This Escherichia coli (strain K12 / MC4100 / BW2952) protein is Transcription antitermination protein NusB.